The chain runs to 188 residues: Probable nicotinate-nucleotide adenylyltransferase (188 aa).

This sequence belongs to the NadD family.

It carries out the reaction nicotinate beta-D-ribonucleotide + ATP + H(+) = deamido-NAD(+) + diphosphate. Its pathway is cofactor biosynthesis; NAD(+) biosynthesis; deamido-NAD(+) from nicotinate D-ribonucleotide: step 1/1. Functionally, catalyzes the reversible adenylation of nicotinate mononucleotide (NaMN) to nicotinic acid adenine dinucleotide (NaAD). This Acholeplasma laidlawii (strain PG-8A) protein is Probable nicotinate-nucleotide adenylyltransferase.